The chain runs to 166 residues: Regulatory protein RecX (166 aa).

This sequence belongs to the RecX family.

The protein localises to the cytoplasm. Modulates RecA activity. This chain is Regulatory protein RecX, found in Escherichia coli (strain SMS-3-5 / SECEC).